Reading from the N-terminus, the 347-residue chain is Tetracycline resistance determinant (347 aa).

Helical transmembrane passes span 3–20 (VLGA…LIVA), 30–52 (SPAA…PVEL), 73–95 (CSAV…PLFL), 108–130 (LVVI…LIAS), 137–156 (LAIV…ATTG), 161–183 (MWGI…TVIT), 204–226 (CAGQ…AVAL), and 294–316 (GFHI…TWFL). Residues 321-347 (EETAPEEERPAESGAGAKNGPLPASDA) form a disordered region.

The protein belongs to the major facilitator superfamily. TCR/Tet family.

Its subcellular location is the cell membrane. Resistance to tetracycline by an active tetracycline efflux. This is an energy-dependent process that decreases the accumulation of the antibiotic in whole cells. This protein functions as a metal-tetracycline/H(+) antiporter. This chain is Tetracycline resistance determinant (tetB), found in Streptomyces rimosus.